The following is a 441-amino-acid chain: Mannose-6-phosphate isomerase (441 aa).

Residues Gln-111, His-113, Glu-138, and His-285 each coordinate Zn(2+). The active site involves Arg-304.

This sequence belongs to the mannose-6-phosphate isomerase type 1 family. In terms of assembly, monomer. Zn(2+) serves as cofactor.

It is found in the cytoplasm. It catalyses the reaction D-mannose 6-phosphate = D-fructose 6-phosphate. It participates in nucleotide-sugar biosynthesis; GDP-alpha-D-mannose biosynthesis; alpha-D-mannose 1-phosphate from D-fructose 6-phosphate: step 1/2. Functionally, involved in the synthesis of the GDP-mannose and dolichol-phosphate-mannose required for a number of critical mannosyl transfer reactions. In Candida albicans (strain SC5314 / ATCC MYA-2876) (Yeast), this protein is Mannose-6-phosphate isomerase (PMI1).